Reading from the N-terminus, the 495-residue chain is Glycerol kinase (495 aa).

ADP is bound at residue Thr-13. ATP-binding residues include Thr-13, Thr-14, and Ser-15. A sn-glycerol 3-phosphate-binding site is contributed by Thr-13. ADP is bound at residue Arg-17. Residues Arg-83, Glu-84, Tyr-135, and Asp-244 each contribute to the sn-glycerol 3-phosphate site. The glycerol site is built by Arg-83, Glu-84, Tyr-135, Asp-244, and Gln-245. The ADP site is built by Thr-266 and Gly-309. ATP contacts are provided by Thr-266, Gly-309, Gln-313, and Gly-410. Residues Gly-410 and Asn-414 each contribute to the ADP site.

Belongs to the FGGY kinase family.

It catalyses the reaction glycerol + ATP = sn-glycerol 3-phosphate + ADP + H(+). It functions in the pathway polyol metabolism; glycerol degradation via glycerol kinase pathway; sn-glycerol 3-phosphate from glycerol: step 1/1. Its activity is regulated as follows. Inhibited by fructose 1,6-bisphosphate (FBP). Its function is as follows. Key enzyme in the regulation of glycerol uptake and metabolism. Catalyzes the phosphorylation of glycerol to yield sn-glycerol 3-phosphate. The sequence is that of Glycerol kinase from Shewanella sediminis (strain HAW-EB3).